The sequence spans 430 residues: Tol-Pal system protein TolB (430 aa).

Residues 1–21 (MKQALRVAVSFFMLWAAVLHA) form the signal peptide.

This sequence belongs to the TolB family. The Tol-Pal system is composed of five core proteins: the inner membrane proteins TolA, TolQ and TolR, the periplasmic protein TolB and the outer membrane protein Pal. They form a network linking the inner and outer membranes and the peptidoglycan layer.

Its subcellular location is the periplasm. Its function is as follows. Part of the Tol-Pal system, which plays a role in outer membrane invagination during cell division and is important for maintaining outer membrane integrity. TolB occupies a key intermediary position in the Tol-Pal system because it communicates directly with both membrane-embedded components, Pal in the outer membrane and TolA in the inner membrane. This chain is Tol-Pal system protein TolB, found in Enterobacter sp. (strain 638).